Reading from the N-terminus, the 705-residue chain is Translation factor GUF1 homolog, mitochondrial (705 aa).

The N-terminal 20 residues, 1-20 (MVCHRYLLGLGASTLCLRRL), are a transit peptide targeting the mitochondrion. Residues 72-92 (PVEDNGTTNLTGTGEATSETG) form a disordered region. Residues 76–90 (NGTTNLTGTGEATSE) are compositionally biased toward polar residues. A tr-type G domain is found at 105–288 (NRMRNFCIIA…AVVERIPPPK (184 aa)). Residues 114–121 (AHVDHGKS), 181–185 (DTPGH), and 235–238 (NKID) each bind GTP.

Belongs to the TRAFAC class translation factor GTPase superfamily. Classic translation factor GTPase family. LepA subfamily.

It is found in the mitochondrion inner membrane. The catalysed reaction is GTP + H2O = GDP + phosphate + H(+). Functionally, promotes mitochondrial protein synthesis. May act as a fidelity factor of the translation reaction, by catalyzing a one-codon backward translocation of tRNAs on improperly translocated ribosomes. Binds to mitochondrial ribosomes in a GTP-dependent manner. This Babesia bovis protein is Translation factor GUF1 homolog, mitochondrial.